An 83-amino-acid polypeptide reads, in one-letter code: Cytochrome b559 subunit alpha (83 aa).

Residues 21–35 (VIHSITIPSLFIAGW) traverse the membrane as a helical segment. His23 is a heme binding site.

The protein belongs to the PsbE/PsbF family. As to quaternary structure, heterodimer of an alpha subunit and a beta subunit. PSII is composed of 1 copy each of membrane proteins PsbA, PsbB, PsbC, PsbD, PsbE, PsbF, PsbH, PsbI, PsbJ, PsbK, PsbL, PsbM, PsbT, PsbX, PsbY, PsbZ, Psb30/Ycf12, at least 3 peripheral proteins of the oxygen-evolving complex and a large number of cofactors. It forms dimeric complexes. It depends on heme b as a cofactor.

It localises to the plastid. Its subcellular location is the chloroplast thylakoid membrane. Functionally, this b-type cytochrome is tightly associated with the reaction center of photosystem II (PSII). PSII is a light-driven water:plastoquinone oxidoreductase that uses light energy to abstract electrons from H(2)O, generating O(2) and a proton gradient subsequently used for ATP formation. It consists of a core antenna complex that captures photons, and an electron transfer chain that converts photonic excitation into a charge separation. In Acorus calamus (Sweet flag), this protein is Cytochrome b559 subunit alpha.